The chain runs to 64 residues: Outer envelope membrane protein 7 (64 aa).

At 1–11 the chain is on the chloroplast intermembrane side; sequence MGKTSGAKQAT. Residues 12–32 form a helical membrane-spanning segment; the sequence is VVVAAMALGWLAIEIAFKPFL. The short motif at 29–35 is the AKR2A-binding sequence (ABS) required for chloroplast outer envelope membrane targeting element; sequence KPFLDKF. Residues 33 to 64 are Cytoplasmic-facing; it reads DKFRSSIDKSDPTKDPDDFDTAATATTSKEGL. Positions 39 to 48 are enriched in basic and acidic residues; that stretch reads IDKSDPTKDP. The tract at residues 39–64 is disordered; that stretch reads IDKSDPTKDPDDFDTAATATTSKEGL. Residues 53–64 show a composition bias toward low complexity; that stretch reads TAATATTSKEGL.

In terms of assembly, interacts with AKR2A. In terms of tissue distribution, confined to green tissues.

The protein resides in the plastid. The protein localises to the chloroplast outer membrane. This Arabidopsis thaliana (Mouse-ear cress) protein is Outer envelope membrane protein 7.